A 125-amino-acid chain; its full sequence is Large ribosomal subunit protein bL12 (125 aa).

Belongs to the bacterial ribosomal protein bL12 family. In terms of assembly, homodimer. Part of the ribosomal stalk of the 50S ribosomal subunit. Forms a multimeric L10(L12)X complex, where L10 forms an elongated spine to which 2 to 4 L12 dimers bind in a sequential fashion. Binds GTP-bound translation factors.

Functionally, forms part of the ribosomal stalk which helps the ribosome interact with GTP-bound translation factors. Is thus essential for accurate translation. This chain is Large ribosomal subunit protein bL12, found in Rickettsia conorii (strain ATCC VR-613 / Malish 7).